The following is a 616-amino-acid chain: Chaperone protein HscA (616 aa).

Belongs to the heat shock protein 70 family.

Functionally, chaperone involved in the maturation of iron-sulfur cluster-containing proteins. Has a low intrinsic ATPase activity which is markedly stimulated by HscB. Involved in the maturation of IscU. This Cronobacter sakazakii (strain ATCC BAA-894) (Enterobacter sakazakii) protein is Chaperone protein HscA.